The following is a 90-amino-acid chain: MLAKLFGLGKKQQSASLAKERLQIIVAHQRNELHPRSSKISSHLLAELKDEIIEVVKKYVALSEDNIRDIDIKVEDSSKNSTIEVNIPFN.

It belongs to the MinE family.

In terms of biological role, prevents the cell division inhibition by proteins MinC and MinD at internal division sites while permitting inhibition at polar sites. This ensures cell division at the proper site by restricting the formation of a division septum at the midpoint of the long axis of the cell. This chain is Cell division topological specificity factor, found in Francisella philomiragia subsp. philomiragia (strain ATCC 25017 / CCUG 19701 / FSC 153 / O#319-036).